A 436-amino-acid chain; its full sequence is Trigger factor (436 aa).

In terms of domain architecture, PPIase FKBP-type spans 161 to 246; sequence DDRVTVDFVG…VNKVEGLSLP (86 aa).

The protein belongs to the FKBP-type PPIase family. Tig subfamily.

Its subcellular location is the cytoplasm. The enzyme catalyses [protein]-peptidylproline (omega=180) = [protein]-peptidylproline (omega=0). Its function is as follows. Involved in protein export. Acts as a chaperone by maintaining the newly synthesized protein in an open conformation. Functions as a peptidyl-prolyl cis-trans isomerase. This chain is Trigger factor, found in Pseudoalteromonas atlantica (strain T6c / ATCC BAA-1087).